We begin with the raw amino-acid sequence, 412 residues long: Tyrosine--tRNA ligase (412 aa).

An L-tyrosine-binding site is contributed by Tyr-31. The 'HIGH' region motif lies at 36-45; that stretch reads PTAPSLHIGH. The L-tyrosine site is built by Tyr-162 and Gln-166. The short motif at 222 to 226 is the 'KMSKS' region element; it reads KIGKT. Residue Lys-225 participates in ATP binding. Positions 345-411 constitute an S4 RNA-binding domain; it reads KRWLDIVVEL…GKRKKQVIDL (67 aa).

It belongs to the class-I aminoacyl-tRNA synthetase family. TyrS type 1 subfamily. In terms of assembly, homodimer.

It is found in the cytoplasm. The catalysed reaction is tRNA(Tyr) + L-tyrosine + ATP = L-tyrosyl-tRNA(Tyr) + AMP + diphosphate + H(+). In terms of biological role, catalyzes the attachment of tyrosine to tRNA(Tyr) in a two-step reaction: tyrosine is first activated by ATP to form Tyr-AMP and then transferred to the acceptor end of tRNA(Tyr). This is Tyrosine--tRNA ligase from Chlamydia trachomatis serovar A (strain ATCC VR-571B / DSM 19440 / HAR-13).